Consider the following 502-residue polypeptide: Glycerol kinase (502 aa).

Threonine 14 serves as a coordination point for ADP. The ATP site is built by threonine 14, threonine 15, and serine 16. Threonine 14 is a sn-glycerol 3-phosphate binding site. Residue arginine 18 participates in ADP binding. 4 residues coordinate sn-glycerol 3-phosphate: arginine 84, glutamate 85, tyrosine 136, and aspartate 246. 5 residues coordinate glycerol: arginine 84, glutamate 85, tyrosine 136, aspartate 246, and glutamine 247. Residues threonine 268 and glycine 311 each contribute to the ADP site. ATP-binding residues include threonine 268, glycine 311, glutamine 315, and glycine 412. Glycine 412 and asparagine 416 together coordinate ADP.

It belongs to the FGGY kinase family. As to quaternary structure, homotetramer and homodimer (in equilibrium). Heterodimer with EIIA-Glc. Binds 1 zinc ion per glycerol kinase EIIA-Glc dimer. The zinc ion is important for dimerization.

The catalysed reaction is glycerol + ATP = sn-glycerol 3-phosphate + ADP + H(+). The protein operates within polyol metabolism; glycerol degradation via glycerol kinase pathway; sn-glycerol 3-phosphate from glycerol: step 1/1. Activity of this regulatory enzyme is affected by several metabolites. Allosterically and non-competitively inhibited by fructose 1,6-bisphosphate (FBP) and unphosphorylated phosphocarrier protein EIIA-Glc (III-Glc), an integral component of the bacterial phosphotransferase (PTS) system. Functionally, key enzyme in the regulation of glycerol uptake and metabolism. Catalyzes the phosphorylation of glycerol to yield sn-glycerol 3-phosphate. The sequence is that of Glycerol kinase from Escherichia coli O8 (strain IAI1).